Reading from the N-terminus, the 335-residue chain is Hsp90 co-chaperone Cdc37-like 1 (335 aa).

The segment covering 1-11 (MEQPWPPPGPW) has biased composition (pro residues). Positions 1–42 (MEQPWPPPGPWSFPRTGGETEEESDLDVSPSSSHYSPVPDGG) are disordered. The segment at 2 to 170 (EQPWPPPGPW…YEQKIRHFGM (169 aa)) is self-association. The span at 27 to 40 (DVSPSSSHYSPVPD) shows a compositional bias: low complexity. Phosphoserine is present on residues S32 and S88. Residues 84–120 (HNSESLDQEHAKAQTAVSELRQREEEWRQKEEALVQR) adopt a coiled-coil conformation. The self-association and interaction with Hsp90 stretch occupies residues 147-276 (KTEDEDKSQS…ARVRLYAQSQ (130 aa)). The interval 266-335 (KARVRLYAQS…EDDDRMMDTV (70 aa)) is interaction with Hsp70. The segment at 277–335 (SFAPVTVENHAPHSGVGCIGSAEPLPQNPDSLQCCPPAPLCSVDSVVHKEDDDRMMDTV) is required for interaction with STIP1.

Belongs to the CDC37 family. Self-associates. Forms complexes with Hsp70 and Hsp90. Interacts with CDC37, FKBP4, PPID and STIP1.

It localises to the cytoplasm. Co-chaperone that binds to numerous proteins and promotes their interaction with Hsp70 and Hsp90. This is Hsp90 co-chaperone Cdc37-like 1 (Cdc37l1) from Rattus norvegicus (Rat).